The sequence spans 321 residues: Lipoyl synthase (321 aa).

[4Fe-4S] cluster-binding residues include Cys68, Cys73, Cys79, Cys94, Cys98, Cys101, and Ser308. A Radical SAM core domain is found at 80 to 297 (FNHGTATFMI…KEIALELGFT (218 aa)).

This sequence belongs to the radical SAM superfamily. Lipoyl synthase family. Requires [4Fe-4S] cluster as cofactor.

The protein resides in the cytoplasm. The enzyme catalyses [[Fe-S] cluster scaffold protein carrying a second [4Fe-4S](2+) cluster] + N(6)-octanoyl-L-lysyl-[protein] + 2 oxidized [2Fe-2S]-[ferredoxin] + 2 S-adenosyl-L-methionine + 4 H(+) = [[Fe-S] cluster scaffold protein] + N(6)-[(R)-dihydrolipoyl]-L-lysyl-[protein] + 4 Fe(3+) + 2 hydrogen sulfide + 2 5'-deoxyadenosine + 2 L-methionine + 2 reduced [2Fe-2S]-[ferredoxin]. It functions in the pathway protein modification; protein lipoylation via endogenous pathway; protein N(6)-(lipoyl)lysine from octanoyl-[acyl-carrier-protein]: step 2/2. In terms of biological role, catalyzes the radical-mediated insertion of two sulfur atoms into the C-6 and C-8 positions of the octanoyl moiety bound to the lipoyl domains of lipoate-dependent enzymes, thereby converting the octanoylated domains into lipoylated derivatives. The protein is Lipoyl synthase of Vibrio cholerae serotype O1 (strain ATCC 39541 / Classical Ogawa 395 / O395).